Here is a 389-residue protein sequence, read N- to C-terminus: uncharacterized protein (389 aa).

A compositionally biased stretch (polar residues) spans 1–12 (MVHATSQSASTE). Disordered stretches follow at residues 1-49 (MVHA…DEDL) and 86-111 (HKSM…ANRA). The segment covering 40 to 49 (ESGDEYDEDL) has biased composition (acidic residues). Residues 93-110 (RGKKKRGKTAKKAKKANR) are compositionally biased toward basic residues.

This is an uncharacterized protein from Caenorhabditis elegans.